The primary structure comprises 205 residues: Auxin-responsive protein IAA8 (205 aa).

Positions 1-48 (MECMASTEESLPASSSMDSCSGELPTTTTTAPAQSTASSGCRPPATAA) are disordered. A compositionally biased stretch (polar residues) spans 7-19 (TEESLPASSSMDS). The segment covering 25 to 39 (PTTTTTAPAQSTASS) has biased composition (low complexity). Positions 58-62 (LRLGL) match the EAR-like (transcriptional repression) motif. Positions 71-98 (DGNNPSTPRSSLTTATVTADRGGGGGGH) are disordered. Over residues 73–87 (NNPSTPRSSLTTATV) the composition is skewed to polar residues. Positions 103–199 (SLFVKVYMEG…KRLRIARADD (97 aa)) constitute a PB1 domain.

This sequence belongs to the Aux/IAA family. Homodimers and heterodimers. As to expression, highly expressed in green shoots. Expressed in flowers.

The protein resides in the nucleus. Its function is as follows. Aux/IAA proteins are short-lived transcriptional factors that function as repressors of early auxin response genes at low auxin concentrations. The sequence is that of Auxin-responsive protein IAA8 (IAA8) from Oryza sativa subsp. japonica (Rice).